The chain runs to 350 residues: Uroporphyrinogen decarboxylase (350 aa).

Residues 27–31 (RQAGR), F46, D76, Y152, S207, and H321 each bind substrate.

The protein belongs to the uroporphyrinogen decarboxylase family. In terms of assembly, homodimer.

Its subcellular location is the cytoplasm. It carries out the reaction uroporphyrinogen III + 4 H(+) = coproporphyrinogen III + 4 CO2. The protein operates within porphyrin-containing compound metabolism; protoporphyrin-IX biosynthesis; coproporphyrinogen-III from 5-aminolevulinate: step 4/4. Its function is as follows. Catalyzes the decarboxylation of four acetate groups of uroporphyrinogen-III to yield coproporphyrinogen-III. In Listeria innocua serovar 6a (strain ATCC BAA-680 / CLIP 11262), this protein is Uroporphyrinogen decarboxylase.